The primary structure comprises 451 residues: Probable glycine dehydrogenase (decarboxylating) subunit 1 (451 aa).

Belongs to the GcvP family. N-terminal subunit subfamily. The glycine cleavage system is composed of four proteins: P, T, L and H. In this organism, the P 'protein' is a heterodimer of two subunits.

It catalyses the reaction N(6)-[(R)-lipoyl]-L-lysyl-[glycine-cleavage complex H protein] + glycine + H(+) = N(6)-[(R)-S(8)-aminomethyldihydrolipoyl]-L-lysyl-[glycine-cleavage complex H protein] + CO2. The glycine cleavage system catalyzes the degradation of glycine. The P protein binds the alpha-amino group of glycine through its pyridoxal phosphate cofactor; CO(2) is released and the remaining methylamine moiety is then transferred to the lipoamide cofactor of the H protein. This is Probable glycine dehydrogenase (decarboxylating) subunit 1 from Thioalkalivibrio sulfidiphilus (strain HL-EbGR7).